A 38-amino-acid polypeptide reads, in one-letter code: Photosystem II reaction center protein X 1 (38 aa).

A helical membrane pass occupies residues phenylalanine 8–phenylalanine 28.

It belongs to the PsbX family. Type 1 subfamily. As to quaternary structure, PSII is composed of 1 copy each of membrane proteins PsbA, PsbB, PsbC, PsbD, PsbE, PsbF, PsbH, PsbI, PsbJ, PsbK, PsbL, PsbM, PsbT, PsbX, PsbY, PsbZ, Psb30/Ycf12, peripheral proteins PsbO, CyanoQ (PsbQ), PsbU, PsbV and a large number of cofactors. It forms dimeric complexes.

It is found in the cellular thylakoid membrane. Its function is as follows. Involved in the binding and/or turnover of quinones at the Q(B) site of photosystem II (PSII). PSII is a light-driven water plastoquinone oxidoreductase, using light energy to abstract electrons from H(2)O, generating a proton gradient subsequently used for ATP formation. This Synechococcus sp. (strain JA-3-3Ab) (Cyanobacteria bacterium Yellowstone A-Prime) protein is Photosystem II reaction center protein X 1.